Consider the following 194-residue polypeptide: Leucyl/phenylalanyl-tRNA--protein transferase (194 aa).

The protein belongs to the L/F-transferase family.

Its subcellular location is the cytoplasm. The enzyme catalyses N-terminal L-lysyl-[protein] + L-leucyl-tRNA(Leu) = N-terminal L-leucyl-L-lysyl-[protein] + tRNA(Leu) + H(+). It carries out the reaction N-terminal L-arginyl-[protein] + L-leucyl-tRNA(Leu) = N-terminal L-leucyl-L-arginyl-[protein] + tRNA(Leu) + H(+). It catalyses the reaction L-phenylalanyl-tRNA(Phe) + an N-terminal L-alpha-aminoacyl-[protein] = an N-terminal L-phenylalanyl-L-alpha-aminoacyl-[protein] + tRNA(Phe). Functions in the N-end rule pathway of protein degradation where it conjugates Leu, Phe and, less efficiently, Met from aminoacyl-tRNAs to the N-termini of proteins containing an N-terminal arginine or lysine. This is Leucyl/phenylalanyl-tRNA--protein transferase from Chlorobium phaeobacteroides (strain DSM 266 / SMG 266 / 2430).